Here is a 244-residue protein sequence, read N- to C-terminus: Ribonuclease 3 2 (244 aa).

The RNase III domain maps to 11–136 (LKALLRRLGL…LLGALYLSVG (126 aa)). Glu50 contacts Mg(2+). Asp54 is an active-site residue. Residues Asp122 and Glu125 each contribute to the Mg(2+) site. Residue Glu125 is part of the active site. Residues 164–234 (NYKEALQAWT…AQQAYQDFIA (71 aa)) form the DRBM domain.

This sequence belongs to the ribonuclease III family. As to quaternary structure, homodimer. Mg(2+) is required as a cofactor.

It localises to the cytoplasm. The enzyme catalyses Endonucleolytic cleavage to 5'-phosphomonoester.. Its function is as follows. Digests double-stranded RNA. Involved in the processing of primary rRNA transcript to yield the immediate precursors to the large and small rRNAs (23S and 16S). Processes some mRNAs, and tRNAs when they are encoded in the rRNA operon. Processes pre-crRNA and tracrRNA of type II CRISPR loci if present in the organism. The protein is Ribonuclease 3 2 of Synechocystis sp. (strain ATCC 27184 / PCC 6803 / Kazusa).